Reading from the N-terminus, the 645-residue chain is MDGTVTLSSTPTAIPPVSALDAGKPTLPPEAPLAMPEQNLREGSLQVRHQRTSPPGIGMRRFYLIGGTFAATAVAVWVMLSVLWPDGISVLEGCLLCLFTLLFAWIAMSFASAVAGFVTVVARAGRKLGIDPEEPLPTLRSRTALLMPTYNEDPRRLLAGLQAIYESVAETGQLEHFDFFVLSDTTREHIGRAEELVYSELCDRVDGHGRIFYRRRADNAARKAGNVADWVRRFGGRYPQMLILDADSVMTGDTIVRLVAGMENNPDVGLIQTLPAVVNGQTLFARMQQFGGRVYGPIIAFGVAWWHGAESNYWGHNAIIRTHAFADHAGLPSLRGRKPFGGHVLSHDFVEAALMRRGGWAMHMVPYLQGSYEEGPPTLTDLLIRDRRWCQGNLQHAKVVSAKGLHWISRMHMLIGIGHYFTAPMWGLLMLIGIGIPLAGVGIDLAGDLPFSPARYWHGSSQGNAIWIFICTMFVLLAPKLLGYIALLLNPRELRACGGAFRAAVSILLETVLAALMAPVVMYLQSRGVFEVLAGKDSGWDAQVRDDGKLSWPALLRSYGGLTVFGLFMGAVAYAVSPALAAWMGPVIVGMALSIPVVALTSLRRTGMALRRAGIFCIPEELDPPKVLVRASELRRAAVLEPSLI.

A compositionally biased stretch (polar residues) spans 1–12 (MDGTVTLSSTPT). The disordered stretch occupies residues 1 to 22 (MDGTVTLSSTPTAIPPVSALDA). 7 helical membrane passes run 64 to 84 (LIGGTFAATAVAVWVMLSVLW), 98 to 118 (LFTLLFAWIAMSFASAVAGFV), 423 to 443 (APMWGLLMLIGIGIPLAGVGI), 465 to 485 (AIWIFICTMFVLLAPKLLGYI), 504 to 524 (AVSILLETVLAALMAPVVMYL), 559 to 579 (YGGLTVFGLFMGAVAYAVSPA), and 580 to 600 (LAAWMGPVIVGMALSIPVVAL).

The protein belongs to the glycosyltransferase 2 family. OpgH subfamily.

It localises to the cell inner membrane. It functions in the pathway glycan metabolism; osmoregulated periplasmic glucan (OPG) biosynthesis. Functionally, involved in the biosynthesis of osmoregulated periplasmic glucans (OPGs). The protein is Glucans biosynthesis glucosyltransferase H of Xanthomonas oryzae pv. oryzae (strain MAFF 311018).